The sequence spans 228 residues: Orotidine 5'-phosphate decarboxylase (228 aa).

Substrate contacts are provided by residues Asp-20, Lys-42, 70-79 (DFKVADIPET), Ser-127, 180-190 (PGVGAQGGDPG), Gly-202, and Arg-203. The active-site Proton donor is the Lys-72.

The protein belongs to the OMP decarboxylase family. Type 1 subfamily. As to quaternary structure, homodimer.

The catalysed reaction is orotidine 5'-phosphate + H(+) = UMP + CO2. It participates in pyrimidine metabolism; UMP biosynthesis via de novo pathway; UMP from orotate: step 2/2. In terms of biological role, catalyzes the decarboxylation of orotidine 5'-monophosphate (OMP) to uridine 5'-monophosphate (UMP). The polypeptide is Orotidine 5'-phosphate decarboxylase (pyrF) (Methanothermobacter thermautotrophicus (strain ATCC 29096 / DSM 1053 / JCM 10044 / NBRC 100330 / Delta H) (Methanobacterium thermoautotrophicum)).